A 263-amino-acid polypeptide reads, in one-letter code: Phosphatidylglycerol--prolipoprotein diacylglyceryl transferase (263 aa).

4 helical membrane passes run 6–26 (VIFS…VLGI), 50–70 (LLTA…VLIY), 85–105 (TWEG…AVII), and 112–132 (IPTF…LFLG). An a 1,2-diacyl-sn-glycero-3-phospho-(1'-sn-glycerol)-binding site is contributed by Arg-133. The next 3 membrane-spanning stretches (helical) occupy residues 169–189 (LYEA…LFFL), 197–217 (GALT…VEFF), and 233–253 (MGQL…LGAL).

This sequence belongs to the Lgt family.

It localises to the cell membrane. The catalysed reaction is L-cysteinyl-[prolipoprotein] + a 1,2-diacyl-sn-glycero-3-phospho-(1'-sn-glycerol) = an S-1,2-diacyl-sn-glyceryl-L-cysteinyl-[prolipoprotein] + sn-glycerol 1-phosphate + H(+). It participates in protein modification; lipoprotein biosynthesis (diacylglyceryl transfer). Functionally, catalyzes the transfer of the diacylglyceryl group from phosphatidylglycerol to the sulfhydryl group of the N-terminal cysteine of a prolipoprotein, the first step in the formation of mature lipoproteins. The chain is Phosphatidylglycerol--prolipoprotein diacylglyceryl transferase from Wolbachia pipientis wMel.